The primary structure comprises 319 residues: NADH-ubiquinone oxidoreductase chain 1 (319 aa).

The next 8 helical transmembrane spans lie at 3-23, 74-94, 106-126, 149-169, 175-195, 226-246, 254-274, and 294-314; these read LITL…AMAF, LFLL…IPLP, ILFI…SGWA, TLGL…LTTF, AVWL…STLA, LFFL…TILF, LTIN…FLWV, and FLPL…SMAG.

The protein belongs to the complex I subunit 1 family.

The protein resides in the mitochondrion inner membrane. The catalysed reaction is a ubiquinone + NADH + 5 H(+)(in) = a ubiquinol + NAD(+) + 4 H(+)(out). Core subunit of the mitochondrial membrane respiratory chain NADH dehydrogenase (Complex I) that is believed to belong to the minimal assembly required for catalysis. Complex I functions in the transfer of electrons from NADH to the respiratory chain. The immediate electron acceptor for the enzyme is believed to be ubiquinone. The sequence is that of NADH-ubiquinone oxidoreductase chain 1 (MT-ND1) from Polypterus ornatipinnis (Ornate bichir).